The primary structure comprises 87 residues: UPF0248 protein TSIB_1445 (87 aa).

Belongs to the UPF0248 family.

This Thermococcus sibiricus (strain DSM 12597 / MM 739) protein is UPF0248 protein TSIB_1445.